A 194-amino-acid chain; its full sequence is Ribosome maturation factor RimM (194 aa).

The region spanning 113–194 (DGEYYWIDLI…RIVADWGLDY (82 aa)) is the PRC barrel domain.

This sequence belongs to the RimM family. Binds ribosomal protein uS19.

The protein resides in the cytoplasm. In terms of biological role, an accessory protein needed during the final step in the assembly of 30S ribosomal subunit, possibly for assembly of the head region. Essential for efficient processing of 16S rRNA. May be needed both before and after RbfA during the maturation of 16S rRNA. It has affinity for free ribosomal 30S subunits but not for 70S ribosomes. This is Ribosome maturation factor RimM from Leptothrix cholodnii (strain ATCC 51168 / LMG 8142 / SP-6) (Leptothrix discophora (strain SP-6)).